A 758-amino-acid polypeptide reads, in one-letter code: Zinc finger protein VAR3, chloroplastic (758 aa).

Residues 122-502 (FPGFPDELLR…PKEETQIGLI (381 aa)) form a 3 X approximate repeat region. 2 RanBP2-type zinc fingers span residues 276–305 (KRGDWICSRCSGMNFARNVKCFQCDEARPK) and 308–338 (LTGSEWECPQCDFYNYGRNVACLRCDCKRPR). Residues 368–415 (RWLSKVAQGGSDANSVDTDEDFPEIMPLRKGVNRYVVSTRKPPLERRL) form repeat 1. Disordered stretches follow at residues 410 to 470 (PLER…RFES), 512 to 545 (GGNQNVYQEDKSDANHSGKETDRLEKEDHKSEEP), 572 to 606 (EKMPMRKGENRFVVSRKKDRSLTSPAYKRPEDSDF), 629 to 654 (TLPAPATENVSQVVQQEPREPSINKS), and 727 to 758 (KRKTPLERRLTSQRHQRNPHITNSDPTGKGDK). 3 stretches are compositionally biased toward basic and acidic residues: residues 457-469 (RSDDKNVSSRRFE), 519-545 (QEDKSDANHSGKETDRLEKEDHKSEEP), and 572-581 (EKMPMRKGEN). Repeat 2 spans residues 547-596 (RWFKRVTELHNVSDLESAIPQEISPEKMPMRKGENRFVVSRKKDRSLTSP). The stretch at 688–736 (RWFKRVAEIKNISELSEIPDEDFPSIMPMRKGVNRFVVSKRKTPLERRL) is repeat 3.

In terms of assembly, interacts in vitro with the chloroplast-located protein CCD4/NCED4. Homodimer. Interacts with ORRM1. Interacts with PCMP-H51/CRR28 and PCMP-H12/OTP82. Interacts with ORRM6. In terms of tissue distribution, weakly expressed in leaves and roots.

It is found in the plastid. Its subcellular location is the chloroplast. Probable component of some protein complex required for chloroplast and palisade cell development. Involved in C-to-U editing of chloroplastic RNA. Controls a large number of chloroplastic editing sites. Binds the editing recognition trans-factors PCMP-H51/CRR28 and PCMP-H12/OTP82. This chain is Zinc finger protein VAR3, chloroplastic, found in Arabidopsis thaliana (Mouse-ear cress).